Reading from the N-terminus, the 80-residue chain is MPKRVLQGVVVSDKNDKTVVLKVERRYSHPLLQKTVRQSKKYKAHDENNQFKVGDFVSIQESAPISKDKRWVVLTSEAAG.

The protein belongs to the universal ribosomal protein uS17 family. Part of the 30S ribosomal subunit.

Its function is as follows. One of the primary rRNA binding proteins, it binds specifically to the 5'-end of 16S ribosomal RNA. In Brucella suis (strain ATCC 23445 / NCTC 10510), this protein is Small ribosomal subunit protein uS17.